A 108-amino-acid chain; its full sequence is MQFTSVFTILAIAMTAAAAPAEVVPRATTIGPNTCSIDDYKPYCCQSMSGPAGSPGLLNLIPVDLSASLGCVVGVIGSQCGASVKCCKDDVTNTGNSFLIINAANCVA.

An N-terminal signal peptide occupies residues 1 to 26 (MQFTSVFTILAIAMTAAAAPAEVVPR). Disulfide bonds link Cys35–Cys86, Cys44–Cys80, Cys45–Cys71, and Cys87–Cys106.

The protein belongs to the fungal hydrophobin family. In terms of assembly, self-assembles to form functional amyloid fibrils called rodlets. Self-assembly into fibrillar rodlets occurs spontaneously at hydrophobic:hydrophilic interfaces and the rodlets further associate laterally to form amphipathic monolayers.

Its subcellular location is the secreted. The protein localises to the spore wall. Aerial growth, conidiation, and dispersal of filamentous fungi in the environment rely upon a capability of their secreting small amphipathic proteins called hydrophobins (HPBs) with low sequence identity. Class I can self-assemble into an outermost layer of rodlet bundles on aerial cell surfaces, conferring cellular hydrophobicity that supports fungal growth, development and dispersal; whereas class II form highly ordered films at water-air interfaces through intermolecular interactions but contribute nothing to the rodlet structure. Eas is a class I hydrophobin that forms functional amyloid fibrils called rodlets that facilitate spore formation and dispersal. This is Class I hydrophobin eas from Neurospora crassa (strain ATCC 24698 / 74-OR23-1A / CBS 708.71 / DSM 1257 / FGSC 987).